The primary structure comprises 302 residues: Arginase (302 aa).

The Mn(2+) site is built by His-103, Asp-126, His-128, and Asp-130. Substrate-binding positions include 128 to 132 (HGDLN), 139 to 141 (SGN), and Asp-180. Positions 229 and 231 each coordinate Mn(2+). 2 residues coordinate substrate: Thr-243 and Glu-274.

It belongs to the arginase family. Mn(2+) is required as a cofactor.

It carries out the reaction L-arginine + H2O = urea + L-ornithine. The protein operates within nitrogen metabolism; urea cycle; L-ornithine and urea from L-arginine: step 1/1. This Staphylococcus aureus (strain MRSA252) protein is Arginase (arg).